The following is a 209-amino-acid chain: Ephrin-A2 (209 aa).

Residues 1–20 (MAPAQRPLLPLLLLLLPLRA) form the signal peptide. The region spanning 30–170 (ADRYAVYWNR…RLKVYVRPTN (141 aa)) is the Ephrin RBD domain. Residue asparagine 38 is glycosylated (N-linked (GlcNAc...) asparagine). 2 cysteine pairs are disulfide-bonded: cysteine 69–cysteine 110 and cysteine 98–cysteine 159. N-linked (GlcNAc...) asparagine glycans are attached at residues asparagine 170 and asparagine 184. Asparagine 184 is lipidated: GPI-anchor amidated asparagine. The propeptide at 185-209 (SSCSGLGGCHLFLTTVPVLWSLLGS) is removed in mature form.

It belongs to the ephrin family. In terms of assembly, binds to the receptor tyrosine kinases EPHA3, EPHA4 and EPHA5. Interacts with EPHA8; activates EPHA8. As to expression, expressed in myogenic progenitor cells.

The protein localises to the cell membrane. Functionally, cell surface GPI-bound ligand for Eph receptors, a family of receptor tyrosine kinases which are crucial for migration, repulsion and adhesion during neuronal, vascular and epithelial development. Binds promiscuously Eph receptors residing on adjacent cells, leading to contact-dependent bidirectional signaling into neighboring cells. The signaling pathway downstream of the receptor is referred to as forward signaling while the signaling pathway downstream of the ephrin ligand is referred to as reverse signaling. With the EPHA2 receptor may play a role in bone remodeling through regulation of osteoclastogenesis and osteoblastogenesis. This chain is Ephrin-A2 (Efna2), found in Mus musculus (Mouse).